A 473-amino-acid polypeptide reads, in one-letter code: 3-isopropylmalate dehydratase large subunit (473 aa).

Residues Cys348, Cys413, and Cys416 each contribute to the [4Fe-4S] cluster site.

It belongs to the aconitase/IPM isomerase family. LeuC type 1 subfamily. In terms of assembly, heterodimer of LeuC and LeuD. [4Fe-4S] cluster serves as cofactor.

It carries out the reaction (2R,3S)-3-isopropylmalate = (2S)-2-isopropylmalate. It functions in the pathway amino-acid biosynthesis; L-leucine biosynthesis; L-leucine from 3-methyl-2-oxobutanoate: step 2/4. Functionally, catalyzes the isomerization between 2-isopropylmalate and 3-isopropylmalate, via the formation of 2-isopropylmaleate. This is 3-isopropylmalate dehydratase large subunit from Parvibaculum lavamentivorans (strain DS-1 / DSM 13023 / NCIMB 13966).